Here is a 170-residue protein sequence, read N- to C-terminus: MNTLQKGFTLIELMIVIAIVGILAAVALPAYQDYTARAQVSEAILLAEGQKSAVTEYYLNHGEWPGNNTSAGVATSSEIKGKYVKSVEVKNGVVTAQMASSNVNNEIKGKKLSLWAKRQNGSVKWFCGQPVTRDKAKAANDDVTAAAAANGKKIDTKHLPSTCRDASDAS.

A propeptide spans 1–7 (MNTLQKG) (leader sequence). Phe8 carries the post-translational modification N-methylphenylalanine. The chain crosses the membrane as a helical span at residues 8–28 (FTLIELMIVIAIVGILAAVAL). The O-linked (Gal...) serine glycan is linked to Ser70. Ser100 bears the O-(sn-1-glycerophosphoryl)serine mark. A disulfide bridge links Cys127 with Cys163.

This sequence belongs to the N-Me-Phe pilin family. As to quaternary structure, the pili are polar flexible filaments of about 5.4 nanometers diameter and 2.5 micrometers average length; they consist of only a single polypeptide chain arranged in a helical configuration of five subunits per turn in the assembled pilus. O-linked glycan has been reported to consist either of the Gal(alpha1-3) GlcNAc disaccharide, or the Gal(beta 1-4) Gal(alpha 1-3) 2,4-diacetamido-2,4,6-trideoxyhexose trisaccharide.

The protein localises to the fimbrium. It localises to the membrane. In terms of biological role, major component of the type IV pilus (T4P) that plays a role in cellular adherence, microcolony formation as well as twitching motility. The chain is Fimbrial protein (pilE) from Neisseria meningitidis serogroup B (strain ATCC BAA-335 / MC58).